The sequence spans 65 residues: Large ribosomal subunit protein bL35 (65 aa).

The tract at residues 1–52 is disordered; that stretch reads MPKMKSNRAAAKRFKRTANGGFKSGNSFTSHRFHGKTKKQRRQLRGLSMMDK. A compositionally biased stretch (basic residues) spans 31–44; it reads HRFHGKTKKQRRQL.

This sequence belongs to the bacterial ribosomal protein bL35 family.

This Limosilactobacillus reuteri (strain DSM 20016) (Lactobacillus reuteri) protein is Large ribosomal subunit protein bL35.